We begin with the raw amino-acid sequence, 170 residues long: Large ribosomal subunit protein uL15 (170 aa).

Basic and acidic residues predominate over residues 1 to 12 (MKLHDLRPAEGS). Residues 1 to 50 (MKLHDLRPAEGSHRKRKRIGRGHGSGKVKTGGKGMMGQKARSGPGPYRTF) form a disordered region. The span at 13–26 (HRKRKRIGRGHGSG) shows a compositional bias: basic residues.

Belongs to the universal ribosomal protein uL15 family. In terms of assembly, part of the 50S ribosomal subunit.

Its function is as follows. Binds to the 23S rRNA. This chain is Large ribosomal subunit protein uL15, found in Chloroflexus aggregans (strain MD-66 / DSM 9485).